Consider the following 474-residue polypeptide: L-arabinose isomerase (474 aa).

E306, E331, H348, and H447 together coordinate Mn(2+).

It belongs to the arabinose isomerase family. It depends on Mn(2+) as a cofactor.

It catalyses the reaction beta-L-arabinopyranose = L-ribulose. It participates in carbohydrate degradation; L-arabinose degradation via L-ribulose; D-xylulose 5-phosphate from L-arabinose (bacterial route): step 1/3. Its function is as follows. Catalyzes the conversion of L-arabinose to L-ribulose. This chain is L-arabinose isomerase, found in Leuconostoc mesenteroides subsp. mesenteroides (strain ATCC 8293 / DSM 20343 / BCRC 11652 / CCM 1803 / JCM 6124 / NCDO 523 / NBRC 100496 / NCIMB 8023 / NCTC 12954 / NRRL B-1118 / 37Y).